Consider the following 429-residue polypeptide: Adenylosuccinate synthetase (429 aa).

Residues 12–18 (GDEGKGK) and 40–42 (GHT) contribute to the GTP site. Asp13 functions as the Proton acceptor in the catalytic mechanism. Mg(2+) is bound by residues Asp13 and Gly40. IMP contacts are provided by residues 13–16 (DEGK), 38–41 (NAGH), Thr129, Arg143, Gln223, Thr238, and Arg302. Catalysis depends on His41, which acts as the Proton donor. 298–304 (VVTGRKR) contributes to the substrate binding site. GTP is bound by residues Arg304, 330–332 (KLD), and 412–414 (STS).

This sequence belongs to the adenylosuccinate synthetase family. In terms of assembly, homodimer. The cofactor is Mg(2+).

The protein localises to the cytoplasm. The catalysed reaction is IMP + L-aspartate + GTP = N(6)-(1,2-dicarboxyethyl)-AMP + GDP + phosphate + 2 H(+). Its pathway is purine metabolism; AMP biosynthesis via de novo pathway; AMP from IMP: step 1/2. Its function is as follows. Plays an important role in the de novo pathway of purine nucleotide biosynthesis. Catalyzes the first committed step in the biosynthesis of AMP from IMP. The chain is Adenylosuccinate synthetase from Brucella ovis (strain ATCC 25840 / 63/290 / NCTC 10512).